We begin with the raw amino-acid sequence, 473 residues long: Glutamate--tRNA ligase (473 aa).

Positions 9-19 match the 'HIGH' region motif; sequence PSPTGELHLGS. The 'KMSKS' region motif lies at 237 to 241; the sequence is KLSKK. Lysine 240 provides a ligand contact to ATP.

It belongs to the class-I aminoacyl-tRNA synthetase family. Glutamate--tRNA ligase type 1 subfamily. As to quaternary structure, monomer.

Its subcellular location is the cytoplasm. The enzyme catalyses tRNA(Glu) + L-glutamate + ATP = L-glutamyl-tRNA(Glu) + AMP + diphosphate. Its function is as follows. Catalyzes the attachment of glutamate to tRNA(Glu) in a two-step reaction: glutamate is first activated by ATP to form Glu-AMP and then transferred to the acceptor end of tRNA(Glu). In Wigglesworthia glossinidia brevipalpis, this protein is Glutamate--tRNA ligase.